The primary structure comprises 883 residues: Translation initiation factor IF-2 (883 aa).

The segment at 1 to 259 (MVDTKTPGDK…GASKQRGRLT (259 aa)) is disordered. 2 stretches are compositionally biased toward low complexity: residues 10–22 (KTLTMPTKTLTLK) and 77–89 (PRQQQSRPAPQQS). The segment covering 113–184 (ARVREIEERK…GDAEPAKKPA (72 aa)) has biased composition (basic and acidic residues). A compositionally biased stretch (low complexity) spans 185 to 218 (ETSTTTTTAAPARPATTTTRTPTPAGRPPAVAAE). Over residues 235 to 244 (PARPAPPPKQ) the composition is skewed to pro residues. The tr-type G domain occupies 379–548 (PRSPVVTVMG…MIALQAEILE (170 aa)). Residues 388–395 (GHVDHGKT) form a G1 region. Position 388-395 (388-395 (GHVDHGKT)) interacts with GTP. A G2 region spans residues 413–417 (GITQH). Residues 436-439 (DTPG) are G3. GTP-binding positions include 436–440 (DTPGH) and 490–493 (NKID). The tract at residues 490-493 (NKID) is G4. The interval 526–528 (SAK) is G5.

This sequence belongs to the TRAFAC class translation factor GTPase superfamily. Classic translation factor GTPase family. IF-2 subfamily.

It is found in the cytoplasm. Functionally, one of the essential components for the initiation of protein synthesis. Protects formylmethionyl-tRNA from spontaneous hydrolysis and promotes its binding to the 30S ribosomal subunits. Also involved in the hydrolysis of GTP during the formation of the 70S ribosomal complex. This is Translation initiation factor IF-2 from Rhodopseudomonas palustris (strain ATCC BAA-98 / CGA009).